The sequence spans 509 residues: Subtelomeric hrmA-associated cluster protein AFUA_5G14880 (509 aa).

Functionally, part of the subtelomeric hrmA-associated cluster (HAC) containing genes that alter the hyphal surface (such as reduced total chitin or increased beta-glucan exposure) and perturb inter-hyphal interactions within the developing biofilms, resulting in a loss of vertically aligned polarized growing filaments. Consequently, this hypoxia-typic morphotype (called H-MORPH) with altered biofilm architecture leads to increased hypoxia fitness, increased host inflammation, rapid disease progression, and mortality in a murine model of invasive aspergillosis. In Aspergillus fumigatus (strain ATCC MYA-4609 / CBS 101355 / FGSC A1100 / Af293) (Neosartorya fumigata), this protein is Subtelomeric hrmA-associated cluster protein AFUA_5G14880.